Reading from the N-terminus, the 504-residue chain is Ectoine/proline transporter ProP (504 aa).

A run of 11 helical transmembrane segments spans residues 41–61, 71–91, 118–138, 169–189, 207–227, 272–292, 309–329, 337–357, 362–382, 399–419, and 430–450; these read FMEW…TAVF, LLAV…GGLV, LIGL…LLYL, FFGA…ASVV, DFGW…AVYL, LLIG…LTSY, AAVT…VGMW, PVYA…FLIM, IGAV…YVAL, GMGI…PLIT, and IVPA…LLFM. The tract at residues 477-504 is disordered; sequence NQDEDPNIDLSHMPFPDEENVGAEKQNA.

Belongs to the major facilitator superfamily.

It localises to the cell membrane. With respect to regulation, uptake is activated by osmotic stress. Inhibited by CCCP. Involved in the uptake of osmoprotectants. Can transport ectoine and proline. Protons are probably the coupling ions. The sequence is that of Ectoine/proline transporter ProP from Corynebacterium glutamicum (strain ATCC 13032 / DSM 20300 / JCM 1318 / BCRC 11384 / CCUG 27702 / LMG 3730 / NBRC 12168 / NCIMB 10025 / NRRL B-2784 / 534).